The chain runs to 225 residues: MQIKWFGHAAFMVEVGGARLLIDPWISNPLSPATPQDVINARPTHIMITHDHFDHMGEAVDIAKATKAPIVGTFELTLEVAEKGIPEAQTMPMNIGGTIKLGDGIELYMTPALHTANRGAPSGFVIATPEGTVYHAGDTALFRDMELIGELYDIDVALLPIGSVFTMGPREAAIATQLLRARRVVPMHYNTFPLIKQDPEDFKARVEAVSRAKVFVMKPGDVLKV.

Belongs to the UPF0173 family.

In Pyrobaculum aerophilum (strain ATCC 51768 / DSM 7523 / JCM 9630 / CIP 104966 / NBRC 100827 / IM2), this protein is UPF0173 metal-dependent hydrolase PAE2160.